The sequence spans 603 residues: Proline--tRNA ligase (603 aa).

It belongs to the class-II aminoacyl-tRNA synthetase family. ProS type 1 subfamily. In terms of assembly, homodimer.

It localises to the cytoplasm. It catalyses the reaction tRNA(Pro) + L-proline + ATP = L-prolyl-tRNA(Pro) + AMP + diphosphate. Catalyzes the attachment of proline to tRNA(Pro) in a two-step reaction: proline is first activated by ATP to form Pro-AMP and then transferred to the acceptor end of tRNA(Pro). As ProRS can inadvertently accommodate and process non-cognate amino acids such as alanine and cysteine, to avoid such errors it has two additional distinct editing activities against alanine. One activity is designated as 'pretransfer' editing and involves the tRNA(Pro)-independent hydrolysis of activated Ala-AMP. The other activity is designated 'posttransfer' editing and involves deacylation of mischarged Ala-tRNA(Pro). The misacylated Cys-tRNA(Pro) is not edited by ProRS. The polypeptide is Proline--tRNA ligase (Arthrobacter sp. (strain FB24)).